The chain runs to 424 residues: MADCLSSQLERYANQVASSAGIIISHLKTLKDEPSTLPSETTVPTAIGTAQLQLAEAAFQLLHLTRDPGNVLTNLTVDLQVISSVRWLLHFEIPSLVPQEGTISYQELSCLANVPDNLLRSHLRLAMTCHLFQESGPTGMVAHSAVSRKLASDPSLAYWGQYFANTVFPTATQSVNATATWADSKQLNETAHNLAFDHRGTFFDYIAQDPARTVEFANSMRAVSTTGPFDTCHLCKSFDWSSLGDGVVVDMGGSTGHASITLAESFPSLRFVVQDLPDVVSDSIKRLEERQLPLSVTSRIRFQGHSLFHLQPVKGAAVYLLRQILHDWPNQEAIKILRSIVPAMGPKSRIFIADIVLPKTGSIPATEERVMRCNDLLLHQFTNTLERTFEDWQAIVSRVDDRLQIQHVYRDPGSILSLLVLEIV.

Asp-275 provides a ligand contact to S-adenosyl-L-methionine. Residue His-326 is the Proton acceptor of the active site.

This sequence belongs to the class I-like SAM-binding methyltransferase superfamily. Cation-independent O-methyltransferase family.

It participates in secondary metabolite biosynthesis. Functionally, cytochrome P450 monooxygenase; part of the gene cluster that mediates the biosynthesis of bifonsecin B, a dimeric gamma-naphthopyrone. The first step in the biosynthesis of bifonsecin B is the production of gamma-naphthopyrone precursor YWA1 by the non-reducing polyketide synthase albA, via condensation of one acetyl-CoA starter unit with 6 malonyl-CoA units. YWA1 is then methylated by bfoE at position C-6 to yield foncesin which is further methylated at position C-8 by bfoD to produce fonsecin B. A key enzyme in the biosynthetic pathway is the cytochrome P450 monooxygenase bfoB which catalyzes the oxidative dimerization of fonsecin B to bifonsecin B. Bfob also catalyzes the oxidative dimerization of rubrofusarin B into nigerone. The stereoselectivity of bfoB is influenced by the two natural monomeric substrates; homodimerization of fonsecin B yields a stereochemically pure biaryl, M-foncerine B, while rubrofusarin B yields a mixture of enantiomers M- and P-nigerone. In Aspergillus brasiliensis (strain CBS 101740 / IMI 381727 / IBT 21946), this protein is O-methyltransferase bfoD.